The primary structure comprises 296 residues: Probable lipid kinase YegS-like (296 aa).

The region spanning 1–130 (MPHTLLILNG…IDLAQVNDKH (130 aa)) is the DAGKc domain. ATP is bound by residues Thr37, 63–69 (GDGTINE), and Thr92. Mg(2+)-binding residues include Leu212, Asp215, and Leu217. The active-site Proton acceptor is Glu268.

The protein belongs to the diacylglycerol/lipid kinase family. YegS lipid kinase subfamily. Mg(2+) serves as cofactor. Ca(2+) is required as a cofactor.

The protein resides in the cytoplasm. Probably phosphorylates lipids; the in vivo substrate is unknown. The polypeptide is Probable lipid kinase YegS-like (Yersinia enterocolitica serotype O:8 / biotype 1B (strain NCTC 13174 / 8081)).